The following is a 443-amino-acid chain: DILAAFRVTPQPGVPPEEAGXXVAAESSTGTWTTVWTDGLTSLDRYKGRCYNIEPVPGETDQYICYVAYPLDLFEEGSVTNMFTSIVGNVFGFKALRALRLEDLRIPTAYVKTFQGPPHGIQVERDKLNKYGRPLLGCTIKPKLGLSAKNYGRACYECLRGGLDFTKDDENVNSQPFMRWRDRFLFCAEAIYKAQAETGEIKGHYLNATAGTCEEMMKRAIFARELGVPIIMHDYLTGGFTANTSLAHYCRDNGLLLHIHRAMHAVIDRQKNHGMXFRVLXKALRMSGGDHIHSGTVVGKLEGERDITLGFVDLLRDDFVEKDRSRGIYFTQDWVSLPGVIPVASGGIHVWHMPALTEIFGDDSVLQFGGGTLGHPWGNAPGAVANRVALXXXXXXXNXGXDLAAEGNAIIREASKWSPELAAACEVWKEIKFKFKAVDTLDK.

The substrate site is built by N89 and T139. K141 serves as the catalytic Proton acceptor. Position 143 (K143) interacts with substrate. Mg(2+) contacts are provided by K167, D169, and E170. K167 is subject to N6-carboxylysine. H260 acts as the Proton acceptor in catalysis. Positions 261, 293, and 345 each coordinate substrate.

This sequence belongs to the RuBisCO large chain family. Type I subfamily. In terms of assembly, heterohexadecamer of 8 large chains and 8 small chains; disulfide-linked. The disulfide link is formed within the large subunit homodimers. Mg(2+) serves as cofactor. The disulfide bond which can form in the large chain dimeric partners within the hexadecamer appears to be associated with oxidative stress and protein turnover.

The protein localises to the plastid. Its subcellular location is the chloroplast. It catalyses the reaction 2 (2R)-3-phosphoglycerate + 2 H(+) = D-ribulose 1,5-bisphosphate + CO2 + H2O. It carries out the reaction D-ribulose 1,5-bisphosphate + O2 = 2-phosphoglycolate + (2R)-3-phosphoglycerate + 2 H(+). In terms of biological role, ruBisCO catalyzes two reactions: the carboxylation of D-ribulose 1,5-bisphosphate, the primary event in carbon dioxide fixation, as well as the oxidative fragmentation of the pentose substrate in the photorespiration process. Both reactions occur simultaneously and in competition at the same active site. This is Ribulose bisphosphate carboxylase large chain from Sesamum indicum (Oriental sesame).